The following is a 463-amino-acid chain: L-seryl-tRNA(Sec) selenium transferase (463 aa).

N6-(pyridoxal phosphate)lysine is present on Lys295.

The protein belongs to the SelA family. In terms of assembly, homodecamer; pentamer of dimers. Binds only one seryl-tRNA(Sec) per dimer. Requires pyridoxal 5'-phosphate as cofactor.

Its subcellular location is the cytoplasm. The catalysed reaction is L-seryl-tRNA(Sec) + selenophosphate + H(+) = L-selenocysteinyl-tRNA(Sec) + phosphate. It functions in the pathway aminoacyl-tRNA biosynthesis; selenocysteinyl-tRNA(Sec) biosynthesis; selenocysteinyl-tRNA(Sec) from L-seryl-tRNA(Sec) (bacterial route): step 1/1. Functionally, converts seryl-tRNA(Sec) to selenocysteinyl-tRNA(Sec) required for selenoprotein biosynthesis. This is L-seryl-tRNA(Sec) selenium transferase from Shigella flexneri serotype 5b (strain 8401).